The following is a 294-amino-acid chain: Metallophosphoesterase MPPED2 (294 aa).

Residues Asp65, His67, Asp86, Asn117, and His213 each coordinate Mn(2+). 117–118 (NH) is a binding site for GMP. GMP is bound by residues 225–226 (KE) and 254–255 (HE). His254 contributes to the Mn(2+) binding site.

This sequence belongs to the UPF0046 family. As to quaternary structure, homodimer. Mn(2+) is required as a cofactor. Co(2+) serves as cofactor. As to expression, expressed in fetal brain (at protein level). detected in fetal and adult brain.

Its activity is regulated as follows. Inhibited by nmolar levels of AMP and GMP. In terms of biological role, displays low metallophosphoesterase activity (in vitro). May play a role in the development of the nervous system. This is Metallophosphoesterase MPPED2 (Mpped2) from Rattus norvegicus (Rat).